Here is a 162-residue protein sequence, read N- to C-terminus: MSDTAVADTRRLNSKPQDLTDAYGPPSNFLEIDIFNPQTVGVGRARFTTYEVRMRTNLPIFKLKESCVRRRYSDFEWLKNELERDSKIVVPPLPGKALKRQLPFRGDEGIFEESFIEERRQGLEQFINKIAGHPLAQNERCLHMFLQEEAIDRNYVPGKVRQ.

The segment at methionine 1–threonine 20 is disordered. Serine 2 bears the N-acetylserine mark. Position 23 is a phosphotyrosine (tyrosine 23). In terms of domain architecture, PX spans asparagine 28–aspartate 152. The a 1,2-diacyl-sn-glycero-3-phospho-(1D-myo-inositol-3-phosphate) site is built by arginine 71, serine 73, lysine 96, and arginine 119. Residue serine 73 is modified to Phosphoserine.

This sequence belongs to the sorting nexin family.

It localises to the membrane. May be involved in several stages of intracellular trafficking. The sequence is that of Sorting nexin-12 (SNX12) from Homo sapiens (Human).